The sequence spans 298 residues: Probable D,D-dipeptide transport system permease protein DdpC (298 aa).

The Cytoplasmic portion of the chain corresponds to 1 to 33; sequence MMLSEETSAVRPQKQTRFNGAKLVWMLKGSPLT. The chain crosses the membrane as a helical span at residues 34–54; sequence VTSAVIIVLMLLMMIFSPWLA. At 55–96 the chain is on the periplasmic side; it reads THDPNAIDLTARLLPPSAAHWFGTDEVGRDLFSRVLVGSQQS. Residues 97–117 traverse the membrane as a helical segment; sequence ILAGLVVVAIAGMIGSLLGCL. Residues 97–282 form the ABC transmembrane type-1 domain; it reads ILAGLVVVAI…LTAVGFNLFG (186 aa). Residues 118-124 are Cytoplasmic-facing; that stretch reads SGVLGGR. 2 helical membrane passes run 125–145 and 146–166; these read ADAIIMRIMDIMLSIPSLVLT and MALAAALGPSLFNAMLAIAIV. Residues 167–217 are Cytoplasmic-facing; it reads RIPFYVRLARGQALVVRQYTYVQAAKTFGASRWHLINWHILRNSLPPLIVQ. The chain crosses the membrane as a helical span at residues 218 to 238; sequence ASLDIGSAILMAATLGFIGLG. The Periplasmic segment spans residues 239–260; the sequence is AQQPSAEWGAMVANGRNYVLDQ. The chain crosses the membrane as a helical span at residues 261–281; it reads WWYCAFPGAAILLTAVGFNLF. The Cytoplasmic portion of the chain corresponds to 282–298; that stretch reads GDGIRDLLDPKAGGKQS.

Belongs to the binding-protein-dependent transport system permease family. OppBC subfamily. The complex is composed of two ATP-binding proteins (DdpD and DdpF), two transmembrane proteins (DdpB and DdpC) and a solute-binding protein (DdpA).

It localises to the cell inner membrane. Its function is as follows. Part of the ABC transporter complex DdpABCDF, which is probably involved in D,D-dipeptide transport. Probably responsible for the translocation of the substrate across the membrane. This chain is Probable D,D-dipeptide transport system permease protein DdpC (ddpC), found in Escherichia coli (strain K12).